We begin with the raw amino-acid sequence, 447 residues long: Asparagine--tRNA ligase (447 aa).

Belongs to the class-II aminoacyl-tRNA synthetase family. As to quaternary structure, homodimer.

It localises to the cytoplasm. The catalysed reaction is tRNA(Asn) + L-asparagine + ATP = L-asparaginyl-tRNA(Asn) + AMP + diphosphate + H(+). In Streptococcus pneumoniae (strain ATCC BAA-255 / R6), this protein is Asparagine--tRNA ligase.